A 122-amino-acid chain; its full sequence is Large ribosomal subunit protein uL24 (122 aa).

Belongs to the universal ribosomal protein uL24 family. In terms of assembly, part of the 50S ribosomal subunit.

In terms of biological role, one of two assembly initiator proteins, it binds directly to the 5'-end of the 23S rRNA, where it nucleates assembly of the 50S subunit. Located at the polypeptide exit tunnel on the outside of the subunit. The chain is Large ribosomal subunit protein uL24 from Pyrobaculum arsenaticum (strain DSM 13514 / JCM 11321 / PZ6).